Reading from the N-terminus, the 439-residue chain is Lactamase-like protein nscB (439 aa).

4 residues coordinate Zn(2+): H214, H216, D218, and H219. The active-site Proton donor/acceptor is D218.

It belongs to the metallo-beta-lactamase superfamily. The cofactor is Zn(2+).

The protein operates within secondary metabolite biosynthesis. Lactamase-like protein; part of the gene cluster that mediates the biosynthesis of neosartoricin B, a prenylated anthracenone that probably exhibits T-cell antiproliferative activity, suggestive of a physiological role as an immunosuppressive agent. The non-reducing polyketide synthase nscA probably synthesizes and cyclizes the decaketide backbone. The hydrolase nscB then mediates the product release through hydrolysis followed by spontaneous decarboxylation. The prenyltransferase nscD catalyzes the addition of the dimethylallyl group to the aromatic C5. The FAD-dependent monooxygenase nscC is then responsible for the stereospecific hydroxylation at C2. Neosartoricin B can be converted into two additional compounds neosartoricins C and D. Neosartoricin C is a spirocyclic compound that is cyclized through the attack of C3 hydroxyl on C14, followed by dehydration. On the other hand, neosartoricin D is a further cyclized compound in which attack of C2 on C14 in neosartoricin C results in the formation of the acetal-containing dioxabicyclo-octanone ring. Both of these compounds are novel and possibly represent related metabolites of the gene cluster. This Arthroderma benhamiae (strain ATCC MYA-4681 / CBS 112371) (Trichophyton mentagrophytes) protein is Lactamase-like protein nscB.